The primary structure comprises 115 residues: DNA repair protein homolog YozK (115 aa).

The 104-residue stretch at isoleucine 12–aspartate 115 folds into the UmuC domain. Mg(2+)-binding residues include aspartate 16 and aspartate 115.

It belongs to the DNA polymerase type-Y family. The cofactor is Mg(2+).

This is DNA repair protein homolog YozK (yozK) from Bacillus subtilis (strain 168).